A 357-amino-acid chain; its full sequence is UDP-N-acetylglucosamine--N-acetylmuramyl-(pentapeptide) pyrophosphoryl-undecaprenol N-acetylglucosamine transferase (357 aa).

UDP-N-acetyl-alpha-D-glucosamine-binding positions include 14 to 16, Arg-168, Ser-198, and Gln-292; that span reads TAG.

Belongs to the glycosyltransferase 28 family. MurG subfamily.

The protein localises to the cell membrane. The enzyme catalyses di-trans,octa-cis-undecaprenyl diphospho-N-acetyl-alpha-D-muramoyl-L-alanyl-D-glutamyl-meso-2,6-diaminopimeloyl-D-alanyl-D-alanine + UDP-N-acetyl-alpha-D-glucosamine = di-trans,octa-cis-undecaprenyl diphospho-[N-acetyl-alpha-D-glucosaminyl-(1-&gt;4)]-N-acetyl-alpha-D-muramoyl-L-alanyl-D-glutamyl-meso-2,6-diaminopimeloyl-D-alanyl-D-alanine + UDP + H(+). It functions in the pathway cell wall biogenesis; peptidoglycan biosynthesis. Functionally, cell wall formation. Catalyzes the transfer of a GlcNAc subunit on undecaprenyl-pyrophosphoryl-MurNAc-pentapeptide (lipid intermediate I) to form undecaprenyl-pyrophosphoryl-MurNAc-(pentapeptide)GlcNAc (lipid intermediate II). The chain is UDP-N-acetylglucosamine--N-acetylmuramyl-(pentapeptide) pyrophosphoryl-undecaprenol N-acetylglucosamine transferase from Oceanobacillus iheyensis (strain DSM 14371 / CIP 107618 / JCM 11309 / KCTC 3954 / HTE831).